Here is a 205-residue protein sequence, read N- to C-terminus: MSVVFVAASKLPTPFGEFTMHGFLDEESGKEHVALSMGDIADGAPVLGRLHSECLTGDALFSLRCDCGFQLEGALAAIAEEGRGVLLYLRQEGRGIGLLNKIRAYELQDGGADTVEANLQLGFGADQRDYAMCQPMLAHLGVSSLRLMTNNPRKVKALESYAITVAERVPLQRGLNKHNRRYLATKAGKLGHMLGSLHQGEAETT.

GTP is bound at residue 49–53 (RLHSE). Cys-54, Cys-65, and Cys-67 together coordinate Zn(2+). GTP-binding positions include Gln-70, 92–94 (EGR), and Thr-114. Residue Asp-126 is the Proton acceptor of the active site. Arg-128 serves as the catalytic Nucleophile. Residues Thr-149 and Lys-154 each coordinate GTP.

It belongs to the GTP cyclohydrolase II family. It depends on Zn(2+) as a cofactor.

It catalyses the reaction GTP + 4 H2O = 2,5-diamino-6-hydroxy-4-(5-phosphoribosylamino)-pyrimidine + formate + 2 phosphate + 3 H(+). It participates in cofactor biosynthesis; riboflavin biosynthesis; 5-amino-6-(D-ribitylamino)uracil from GTP: step 1/4. In terms of biological role, catalyzes the conversion of GTP to 2,5-diamino-6-ribosylamino-4(3H)-pyrimidinone 5'-phosphate (DARP), formate and pyrophosphate. The polypeptide is GTP cyclohydrolase-2 (Pseudomonas aeruginosa (strain UCBPP-PA14)).